A 424-amino-acid polypeptide reads, in one-letter code: Putative chloroquine resistance transporter (424 aa).

The Cytoplasmic segment spans residues 1-56; it reads MTGMKKGKNKKKNVKNDERYKELDSLISNDSEIGNNSRWGGAKRICKLIGNEMRNN. A helical transmembrane segment spans residues 57-77; sequence IYVYLLSILYLCVSVMNKVFS. Over 78–88 the chain is Vacuolar; it reads KRTLNKIGNYS. An N-linked (GlcNAc...) asparagine glycan is attached at Asn86. A helical membrane pass occupies residues 89–109; that stretch reads FVTSEVHNMICTIVFQLLYFI. Residues 110–125 are Cytoplasmic-facing; the sequence is YRKTSNPASRNESQKN. The chain crosses the membrane as a helical span at residues 126–146; it reads FGWQFFLISLLDASTVIITMI. Residues 147–156 lie on the Vacuolar side of the membrane; the sequence is GLTRTTGNIQ. Residues 157–177 form a helical membrane-spanning segment; it reads SFIMQLIIPVNMYFCFIFLGY. Over 178 to 180 the chain is Cytoplasmic; it reads RYH. Residues 181 to 201 traverse the membrane as a helical segment; that stretch reads LFNYLGAFIILITIAAVETVL. At 202–209 the chain is on the vacuolar side; the sequence is SYETQSDN. The helical transmembrane segment at 210–230 threads the bilayer; it reads SIIFNLIMIFALIPLSFSNMT. The Cytoplasmic segment spans residues 231 to 248; it reads REVVFKKHKINIIRLNAM. Residues 249–269 form a helical membrane-spanning segment; that stretch reads VALFQFFTSLLVLPVYNISFL. Topologically, residues 270–317 are vacuolar; sequence KEIYMPFSEMGTNINDGLRCLFYGQSTIVENCGVGMVKMCDQCEGAWK. 2 disulfides stabilise this stretch: Cys289-Cys312 and Cys301-Cys309. Residues 318-338 traverse the membrane as a helical segment; sequence TFITYSFFNICDNLLVCYIID. The Cytoplasmic segment spans residues 339-346; it reads KFSTMTYT. A helical membrane pass occupies residues 347–367; sequence IVSCIQGPAITIAYYFKFLAG. The Vacuolar segment spans residues 368 to 377; sequence DVVRQPRLLD. The helical transmembrane segment at 378-398 threads the bilayer; the sequence is FLTLFGYLLGTIIYRIGNIIL. Topologically, residues 399–424 are cytoplasmic; it reads EKKKMLKALNTDGSEAELTSIETSTA.

It belongs to the CRT-like transporter family.

The protein resides in the vacuole membrane. Nutrient transporter. Involved in maintaining the osmotic homeostasis of the digestive vacuole. In Plasmodium chabaudi, this protein is Putative chloroquine resistance transporter.